The chain runs to 477 residues: Myc-associated zinc finger protein (477 aa).

Disordered regions lie at residues 59-78 (AQSPFQAAPAPPPTPQAPAA) and 121-144 (TVDTAALKQPPAPPPPPPAVSAPA). Pro residues predominate over residues 130-140 (PPAPPPPPPAV). 4 C2H2-type zinc fingers span residues 190-212 (YICALCAKEFKNGYNLRRHEAIH), 279-301 (HACEMCGKAFRDVYHLNRHKLSH), 307-329 (YQCPVCQQRFKRKDRMSYHVRSH), and 337-360 (YNCSHCGKSFSRPDHLNSHVRQVH). S361 carries the post-translational modification Phosphoserine. Residues 366-388 (FKCEKCEAAFATKDRLRAHTVRH) form a C2H2-type 5 zinc finger. The segment at 392–413 (VPCHVCGKMLSSAYISDHMKVH) adopts a C2H2-type 6; atypical zinc-finger fold.

As to quaternary structure, interacts with BPTF. Expressed in Purkinje cells in the brain (at protein level).

It localises to the nucleus. Functionally, transcriptional regulator. Acts as a transcriptional activator that binds to purine-rich GAGA sites found in the promoter of many genes including insulin I and II and islet amyloid polypeptide. In Mus musculus (Mouse), this protein is Myc-associated zinc finger protein (Maz).